An 851-amino-acid polypeptide reads, in one-letter code: Protein translocase subunit SecA (851 aa).

ATP is bound by residues Q88, 106–110 (GEGKT), and D496. Positions 828, 830, 839, and 840 each coordinate Zn(2+).

This sequence belongs to the SecA family. In terms of assembly, monomer and homodimer. Part of the essential Sec protein translocation apparatus which comprises SecA, SecYEG and auxiliary proteins SecDF-YajC and YidC. Zn(2+) is required as a cofactor.

The protein resides in the cell inner membrane. It localises to the cytoplasm. It carries out the reaction ATP + H2O + cellular proteinSide 1 = ADP + phosphate + cellular proteinSide 2.. In terms of biological role, part of the Sec protein translocase complex. Interacts with the SecYEG preprotein conducting channel. Has a central role in coupling the hydrolysis of ATP to the transfer of proteins into and across the cell membrane, serving as an ATP-driven molecular motor driving the stepwise translocation of polypeptide chains across the membrane. This chain is Protein translocase subunit SecA, found in Helicobacter hepaticus (strain ATCC 51449 / 3B1).